A 76-amino-acid chain; its full sequence is DNA gyrase inhibitor YacG (76 aa).

Zn(2+) contacts are provided by Cys7, Cys10, Cys26, and Cys30.

Belongs to the DNA gyrase inhibitor YacG family. In terms of assembly, interacts with GyrB. It depends on Zn(2+) as a cofactor.

In terms of biological role, inhibits all the catalytic activities of DNA gyrase by preventing its interaction with DNA. Acts by binding directly to the C-terminal domain of GyrB, which probably disrupts DNA binding by the gyrase. The polypeptide is DNA gyrase inhibitor YacG (Pseudoalteromonas translucida (strain TAC 125)).